Consider the following 61-residue polypeptide: ERRAERESQMRADEEFGSQVQYLTQQRRARLPWRREGRSFDEEFRELRNVDEEERRDMMIE.

This sequence belongs to the 2S seed storage albumins family. As to quaternary structure, the mature protein consists of a small and a large chain linked by 2 disulfide bonds.

Its function is as follows. This is a 2S seed storage protein. Inhibits cell-free protein synthesis. The polypeptide is 2S seed storage albumin protein (Cucurbita moschata (Winter crookneck squash)).